The chain runs to 217 residues: 2-phospho-L-lactate guanylyltransferase (217 aa).

This sequence belongs to the CofC family. As to quaternary structure, homodimer.

It catalyses the reaction (2S)-2-phospholactate + GTP + H(+) = (2S)-lactyl-2-diphospho-5'-guanosine + diphosphate. It functions in the pathway cofactor biosynthesis; coenzyme F420 biosynthesis. Guanylyltransferase that catalyzes the activation of (2S)-2-phospholactate (2-PL) as (2S)-lactyl-2-diphospho-5'-guanosine, via the condensation of 2-PL with GTP. It is involved in the biosynthesis of coenzyme F420, a hydride carrier cofactor. This chain is 2-phospho-L-lactate guanylyltransferase, found in Methanospirillum hungatei JF-1 (strain ATCC 27890 / DSM 864 / NBRC 100397 / JF-1).